The primary structure comprises 397 residues: Subtilisin-like protease 12 (397 aa).

Positions 1-19 are cleaved as a signal peptide; that stretch reads MSIFKLMVIYFTLFWVVNA. Residues 20–116 constitute a propeptide that is removed on maturation; it reads AQLLDLDSHG…VEPNREMKAA (97 aa). In terms of domain architecture, Inhibitor I9 spans 35–115; that stretch reads YIVVMKNGVS…FVEPNREMKA (81 aa). N-linked (GlcNAc...) asparagine glycans are attached at residues Asn123, Asn136, and Asn150. Residues 125 to 397 enclose the Peptidase S8 domain; the sequence is TWGLARISHM…DKLLYNGSGA (273 aa). Active-site charge relay system residues include Asp157 and His188. Asn249, Asn305, and Asn334 each carry an N-linked (GlcNAc...) asparagine glycan. Catalysis depends on Ser343, which acts as the Charge relay system. N-linked (GlcNAc...) asparagine glycosylation is found at Asn385 and Asn393.

It belongs to the peptidase S8 family.

It localises to the secreted. Secreted subtilisin-like serine protease with keratinolytic activity that contributes to pathogenicity. The protein is Subtilisin-like protease 12 (SUB12) of Arthroderma gypseum (strain ATCC MYA-4604 / CBS 118893) (Microsporum gypseum).